We begin with the raw amino-acid sequence, 180 residues long: Signal peptidase complex subunit 2 (180 aa).

Residues 1–45 are Cytoplasmic-facing; that stretch reads MTDEPVKVVNKWDGPTVKNALDEVVKKILNDKVGWTESHNLMNLR. Residues 46–66 traverse the membrane as a helical segment; sequence LLISFIGVAFSAFACGYDYYE. The Lumenal segment spans residues 67-72; that stretch reads PFPKSK. A helical membrane pass occupies residues 73–93; that stretch reads IVLAVCSVSYFICMGILQMYQ. At 94 to 180 the chain is on the cytoplasmic side; that stretch reads WYVEKDCIYE…LYNRLIRSEQ (87 aa).

It belongs to the SPCS2 family. In terms of assembly, component of the signal peptidase complex (SPC) composed of a catalytic subunit sec-11 and three accessory subunits spcs-1, spcs-2 and spcs-3. The complex induces a local thinning of the ER membrane which is used to measure the length of the signal peptide (SP) h-region of protein substrates. This ensures the selectivity of the complex towards h-regions shorter than 18-20 amino acids.

The protein localises to the endoplasmic reticulum membrane. Component of the signal peptidase complex (SPC) which catalyzes the cleavage of N-terminal signal sequences from nascent proteins as they are translocated into the lumen of the endoplasmic reticulum. Enhances the enzymatic activity of SPC and facilitates the interactions between different components of the translocation site. The polypeptide is Signal peptidase complex subunit 2 (Caenorhabditis elegans).